The chain runs to 1807 residues: Integrin beta-4 (1807 aa).

The signal sequence occupies residues 1–27 (MAGLCSSPWVKLLLAVVLSAGLPGNMA). Residues 28-713 (NRCKKAQVKS…KKKDCLPAPS (686 aa)) lie on the Extracellular side of the membrane. Residues 29–73 (RCKKAQVKSCTECIRVDKSCAYCTDELFKERRCNTQADVLAAGCR) form the PSI domain. Intrachain disulfides connect Cys-30-Cys-48, Cys-38-Cys-456, Cys-41-Cys-61, Cys-51-Cys-72, Cys-245-Cys-288, Cys-458-Cys-477, Cys-469-Cys-480, and Cys-482-Cys-491. Positions 131-340 (DLYILMDFSN…SYYEKLHKYF (210 aa)) constitute a VWFA domain. Ser-139 and Ser-141 together coordinate Mg(2+). Ca(2+) is bound by residues Ser-141, Asp-144, Asp-145, and Asp-176. Positions 194 to 199 (WPNSDP) are involved in NRG1- and IGF1-binding. Positions 228, 230, 232, and 233 each coordinate Ca(2+). Mg(2+) is bound at residue Glu-233. N-linked (GlcNAc...) asparagine glycosylation is present at Asn-327. Glu-350 lines the Ca(2+) pocket. 4 consecutive I-EGF domains span residues 458–492 (CELQ…KTCN), 493–538 (CSTG…HFCE), 539–575 (YDNF…RSCD), and 576–617 (CPLS…TTCE). Asn-492 carries N-linked (GlcNAc...) asparagine glycosylation. 11 disulfide bridges follow: Cys-493–Cys-521, Cys-504–Cys-519, Cys-513–Cys-524, Cys-526–Cys-537, Cys-544–Cys-558, Cys-552–Cys-563, Cys-565–Cys-574, Cys-576–Cys-599, Cys-583–Cys-597, Cys-591–Cys-602, and Cys-604–Cys-616. N-linked (GlcNAc...) asparagine glycosylation occurs at Asn-580. N-linked (GlcNAc...) asparagine glycosylation occurs at Asn-619. 4 disulfide bridges follow: Cys-628/Cys-673, Cys-634/Cys-653, Cys-637/Cys-650, and Cys-682/Cys-708. Asn-697 carries an N-linked (GlcNAc...) asparagine glycan. A helical membrane pass occupies residues 714–734 (WWLIPLLIFLLLLLVLLLLLC). The palmitoylated on several cysteines stretch occupies residues 734–751 (CWKYCACCKACLGLLPCC). Over 735 to 1807 (WKYCACCKAC…THMDQQFFQT (1073 aa)) the chain is Cytoplasmic. Residues Ser-773, Ser-1071, and Ser-1121 each carry the phosphoserine modification. A Calx-beta domain is found at 981 to 1086 (VNITIIKEQA…QVRRFQVQLS (106 aa)). The tract at residues 1119-1141 (SASPPLPRGDLGAPQNPNAKAAG) is disordered. Fibronectin type-III domains follow at residues 1131–1220 (APQN…THQE) and 1224–1323 (EPGR…TQPK). Ser-1386, Ser-1389, and Ser-1405 each carry phosphoserine. Phosphothreonine is present on Thr-1418. The residue at position 1425 (Ser-1425) is a Phosphoserine. Residue Thr-1514 is modified to Phosphothreonine. 2 consecutive Fibronectin type-III domains span residues 1514-1609 (TPTR…VHPQ) and 1627-1723 (APGP…SQDG). At Ser-1776 the chain carries Phosphoserine.

This sequence belongs to the integrin beta chain family. As to quaternary structure, heterodimer of an alpha and a beta subunit. Beta-4 associates with alpha-6. Interacts (via cytoplasmic region) with COL17A1 (via cytoplasmic region). Interacts (via cytoplasmic region) with DST isoform 3 (via N-terminus). Interacts (via cytoplasmic domain) with DST (via N-terminus). Interacts with RAC1. ITGA6:ITGB4 is found in a ternary complex with NRG1 and ERBB3. ITGA6:ITGB4 is found in a ternary complex with IGF1 and IGF1R. ITGA6:ITGB4 interacts with IGF2. Interacts with TMEM268; this interaction prevents ITGB4 degradation. Palmitoylated by DHHC3 at several cysteines of the membrane-proximal region, enhancing stability and cell surface expression. Palmitoylation also promotes secondary association with tertaspanins.

It localises to the cell membrane. The protein localises to the cell junction. The protein resides in the hemidesmosome. Integrin alpha-6/beta-4 is a receptor for laminin. It plays a critical structural role in the hemidesmosome of epithelial cells. Is required for the regulation of keratinocyte polarity and motility. ITGA6:ITGB4 binds to NRG1 (via EGF domain) and this binding is essential for NRG1-ERBB signaling. ITGA6:ITGB4 binds to IGF1 and this binding is essential for IGF1 signaling. ITGA6:ITGB4 binds to IGF2 and this binding is essential for IGF2 signaling. The polypeptide is Integrin beta-4 (Itgb4) (Rattus norvegicus (Rat)).